The sequence spans 561 residues: Urocanate hydratase (561 aa).

NAD(+) is bound by residues glycine 52–glycine 53, glutamine 130, glycine 176–glycine 178, glutamate 196, arginine 201, asparagine 242–alanine 243, glutamine 263–histidine 267, tyrosine 273–leucine 274, and tyrosine 322. The active site involves cysteine 410. Glycine 492 lines the NAD(+) pocket.

Belongs to the urocanase family. The cofactor is NAD(+).

The protein localises to the cytoplasm. The catalysed reaction is 4-imidazolone-5-propanoate = trans-urocanate + H2O. Its pathway is amino-acid degradation; L-histidine degradation into L-glutamate; N-formimidoyl-L-glutamate from L-histidine: step 2/3. Catalyzes the conversion of urocanate to 4-imidazolone-5-propionate. In Salmonella arizonae (strain ATCC BAA-731 / CDC346-86 / RSK2980), this protein is Urocanate hydratase.